The sequence spans 314 residues: Methionyl-tRNA formyltransferase (314 aa).

110-113 (SLLP) is a binding site for (6S)-5,6,7,8-tetrahydrofolate.

The protein belongs to the Fmt family.

It catalyses the reaction L-methionyl-tRNA(fMet) + (6R)-10-formyltetrahydrofolate = N-formyl-L-methionyl-tRNA(fMet) + (6S)-5,6,7,8-tetrahydrofolate + H(+). Functionally, attaches a formyl group to the free amino group of methionyl-tRNA(fMet). The formyl group appears to play a dual role in the initiator identity of N-formylmethionyl-tRNA by promoting its recognition by IF2 and preventing the misappropriation of this tRNA by the elongation apparatus. This is Methionyl-tRNA formyltransferase from Levilactobacillus brevis (strain ATCC 367 / BCRC 12310 / CIP 105137 / JCM 1170 / LMG 11437 / NCIMB 947 / NCTC 947) (Lactobacillus brevis).